Here is a 362-residue protein sequence, read N- to C-terminus: Alternative oxidase, mitochondrial (362 aa).

A mitochondrion-targeting transit peptide spans 1-64 (MNTPKVNILY…RGFTTTSVVR (64 aa)). Residues 156–176 (LVRFIFLESIAGVPGMVAGML) form a helical membrane-spanning segment. Fe cation is bound by residues glutamate 163, glutamate 202, and histidine 205. Residues 222-242 (LILGAQGVFFNAMFLSYLVSP) traverse the membrane as a helical segment. Glutamate 253, glutamate 310, and histidine 313 together coordinate Fe cation.

Belongs to the alternative oxidase family. Fe cation is required as a cofactor.

Its subcellular location is the mitochondrion inner membrane. In terms of biological role, catalyzes cyanide-resistant oxygen consumption. May increase respiration when the cytochrome respiratory pathway is restricted, or in response to low temperatures. In Gelasinospora sp. (strain S23), this protein is Alternative oxidase, mitochondrial (aod-1).